The following is a 487-amino-acid chain: Malonate-semialdehyde dehydrogenase 2 (487 aa).

NAD(+) is bound by residues Phe-154, Lys-178, Glu-181, Arg-182, and Ser-231. Cys-286 acts as the Nucleophile in catalysis. Glu-386 provides a ligand contact to NAD(+).

This sequence belongs to the aldehyde dehydrogenase family. IolA subfamily. As to quaternary structure, homotetramer.

The enzyme catalyses 3-oxopropanoate + NAD(+) + CoA + H2O = hydrogencarbonate + acetyl-CoA + NADH + H(+). It carries out the reaction 2-methyl-3-oxopropanoate + NAD(+) + CoA + H2O = propanoyl-CoA + hydrogencarbonate + NADH + H(+). It functions in the pathway polyol metabolism; myo-inositol degradation into acetyl-CoA; acetyl-CoA from myo-inositol: step 7/7. Functionally, catalyzes the oxidation of malonate semialdehyde (MSA) and methylmalonate semialdehyde (MMSA) into acetyl-CoA and propanoyl-CoA, respectively. Is involved in a myo-inositol catabolic pathway. Bicarbonate, and not CO2, is the end-product of the enzymatic reaction. The chain is Malonate-semialdehyde dehydrogenase 2 from Bacillus anthracis.